A 109-amino-acid polypeptide reads, in one-letter code: MKIKIDIIHFINAPPFFFFFVDAEASQLKAFQLFLLGHIFYTYIHTYICDFDEFETKDLAEGKIGDLISRLEFCSNAIIESLPNTFQSFVPVKFSTDKLLEESKGLLDV.

This is an uncharacterized protein from Saccharomyces cerevisiae (strain ATCC 204508 / S288c) (Baker's yeast).